The primary structure comprises 938 residues: Isoleucine--tRNA ligase (938 aa).

Residues 58 to 68 (PYANGSIHIGH) carry the 'HIGH' region motif. Residue Glu-561 coordinates L-isoleucyl-5'-AMP. A 'KMSKS' region motif is present at residues 602-606 (KMSKS). Lys-605 is an ATP binding site. Positions 901, 904, 921, and 924 each coordinate Zn(2+).

It belongs to the class-I aminoacyl-tRNA synthetase family. IleS type 1 subfamily. In terms of assembly, monomer. The cofactor is Zn(2+).

The protein localises to the cytoplasm. It catalyses the reaction tRNA(Ile) + L-isoleucine + ATP = L-isoleucyl-tRNA(Ile) + AMP + diphosphate. Its function is as follows. Catalyzes the attachment of isoleucine to tRNA(Ile). As IleRS can inadvertently accommodate and process structurally similar amino acids such as valine, to avoid such errors it has two additional distinct tRNA(Ile)-dependent editing activities. One activity is designated as 'pretransfer' editing and involves the hydrolysis of activated Val-AMP. The other activity is designated 'posttransfer' editing and involves deacylation of mischarged Val-tRNA(Ile). In Erwinia tasmaniensis (strain DSM 17950 / CFBP 7177 / CIP 109463 / NCPPB 4357 / Et1/99), this protein is Isoleucine--tRNA ligase.